The following is a 300-amino-acid chain: UPF0282 protein TGAM_0379 (300 aa).

This sequence belongs to the UPF0282 family.

The polypeptide is UPF0282 protein TGAM_0379 (Thermococcus gammatolerans (strain DSM 15229 / JCM 11827 / EJ3)).